The chain runs to 328 residues: Lipoyl synthase (328 aa).

Positions 57, 62, 68, 83, 87, 90, and 298 each coordinate [4Fe-4S] cluster. Residues 69-287 enclose the Radical SAM core domain; the sequence is WSRGTATFML…REEGLSLGFL (219 aa).

It belongs to the radical SAM superfamily. Lipoyl synthase family. [4Fe-4S] cluster is required as a cofactor.

It localises to the cytoplasm. The catalysed reaction is [[Fe-S] cluster scaffold protein carrying a second [4Fe-4S](2+) cluster] + N(6)-octanoyl-L-lysyl-[protein] + 2 oxidized [2Fe-2S]-[ferredoxin] + 2 S-adenosyl-L-methionine + 4 H(+) = [[Fe-S] cluster scaffold protein] + N(6)-[(R)-dihydrolipoyl]-L-lysyl-[protein] + 4 Fe(3+) + 2 hydrogen sulfide + 2 5'-deoxyadenosine + 2 L-methionine + 2 reduced [2Fe-2S]-[ferredoxin]. It functions in the pathway protein modification; protein lipoylation via endogenous pathway; protein N(6)-(lipoyl)lysine from octanoyl-[acyl-carrier-protein]: step 2/2. Functionally, catalyzes the radical-mediated insertion of two sulfur atoms into the C-6 and C-8 positions of the octanoyl moiety bound to the lipoyl domains of lipoate-dependent enzymes, thereby converting the octanoylated domains into lipoylated derivatives. This Deinococcus geothermalis (strain DSM 11300 / CIP 105573 / AG-3a) protein is Lipoyl synthase.